The chain runs to 123 residues: Small ribosomal subunit protein uS12cz/uS12cy (123 aa).

It belongs to the universal ribosomal protein uS12 family. As to quaternary structure, part of the 30S ribosomal subunit.

It localises to the plastid. The protein localises to the chloroplast. With S4 and S5 plays an important role in translational accuracy. Located at the interface of the 30S and 50S subunits. The chain is Small ribosomal subunit protein uS12cz/uS12cy (rps12-A) from Phaseolus vulgaris (Kidney bean).